The primary structure comprises 185 residues: Elongation factor P (185 aa).

The protein belongs to the elongation factor P family.

Its subcellular location is the cytoplasm. It participates in protein biosynthesis; polypeptide chain elongation. Functionally, involved in peptide bond synthesis. Stimulates efficient translation and peptide-bond synthesis on native or reconstituted 70S ribosomes in vitro. Probably functions indirectly by altering the affinity of the ribosome for aminoacyl-tRNA, thus increasing their reactivity as acceptors for peptidyl transferase. This is Elongation factor P from Geobacillus kaustophilus (strain HTA426).